Reading from the N-terminus, the 372-residue chain is Methylthioribose-1-phosphate isomerase 1 (372 aa).

Aspartate 254 (proton donor) is an active-site residue.

It belongs to the eIF-2B alpha/beta/delta subunits family. MtnA subfamily.

It localises to the cytoplasm. It is found in the nucleus. It carries out the reaction 5-(methylsulfanyl)-alpha-D-ribose 1-phosphate = 5-(methylsulfanyl)-D-ribulose 1-phosphate. It participates in amino-acid biosynthesis; L-methionine biosynthesis via salvage pathway; L-methionine from S-methyl-5-thio-alpha-D-ribose 1-phosphate: step 1/6. In terms of biological role, catalyzes the interconversion of methylthioribose-1-phosphate (MTR-1-P) into methylthioribulose-1-phosphate (MTRu-1-P). This is Methylthioribose-1-phosphate isomerase 1 from Trypanosoma cruzi (strain CL Brener).